We begin with the raw amino-acid sequence, 240 residues long: uncharacterized protein (240 aa).

A helical membrane pass occupies residues 73-93 (LLGCLYFFIYFVAPTLGPVLF).

It belongs to the universal ribosomal protein uS3 family.

It is found in the mitochondrion membrane. This is an uncharacterized protein from Arabidopsis thaliana (Mouse-ear cress).